A 90-amino-acid polypeptide reads, in one-letter code: DNA-binding protein HU-beta (90 aa).

This sequence belongs to the bacterial histone-like protein family. In terms of assembly, heterodimer of an alpha and a beta chain.

In terms of biological role, histone-like DNA-binding protein which is capable of wrapping DNA to stabilize it, and thus to prevent its denaturation under extreme environmental conditions. The chain is DNA-binding protein HU-beta (hupB) from Serratia marcescens.